Reading from the N-terminus, the 364-residue chain is Ribosomal RNA large subunit methyltransferase F (364 aa).

Residues M1–A30 form a disordered region.

This sequence belongs to the methyltransferase superfamily. METTL16/RlmF family.

It localises to the cytoplasm. The catalysed reaction is adenosine(1618) in 23S rRNA + S-adenosyl-L-methionine = N(6)-methyladenosine(1618) in 23S rRNA + S-adenosyl-L-homocysteine + H(+). Its function is as follows. Specifically methylates the adenine in position 1618 of 23S rRNA. The polypeptide is Ribosomal RNA large subunit methyltransferase F (Vibrio vulnificus (strain CMCP6)).